Here is a 327-residue protein sequence, read N- to C-terminus: Tetraspanin-4 (327 aa).

Residues 1-6 (MRSRSN) lie on the Cytoplasmic side of the membrane. Residues 7 to 27 (LIGLINFFTFLLSIPILGGGI) form a helical membrane-spanning segment. The Extracellular segment spans residues 28 to 43 (WLSSRANSTDCLRFLQ). Asn34 is a glycosylation site (N-linked (GlcNAc...) asparagine). A helical membrane pass occupies residues 44-64 (WPLIIIGISIMVISLAGIAGA). The Cytoplasmic segment spans residues 65 to 75 (CYQNKFLMWLY). Residues 76-96 (LFTMFFVIAALIGFTIFAYVV) form a helical membrane-spanning segment. Topologically, residues 97–235 (TDKGSGRFVM…LGSLKKSWRK (139 aa)) are extracellular. An N-linked (GlcNAc...) asparagine glycan is attached at Asn187. Residues 236–256 (VSVINIVVVIILVIFYVIACA) traverse the membrane as a helical segment. The Cytoplasmic segment spans residues 257 to 287 (AYQNVKRMYNDEPVGEARMTNLILVIFKFKE). The chain crosses the membrane as a helical span at residues 288 to 308 (ILVQFFFGIVFLLLFNGLMVC). Residues 309–327 (CCNDKFAFSVFFFGYVTYA) lie on the Extracellular side of the membrane.

Belongs to the tetraspanin (TM4SF) family.

The protein localises to the membrane. Functionally, may be involved in the regulation of cell differentiation. The polypeptide is Tetraspanin-4 (TET4) (Arabidopsis thaliana (Mouse-ear cress)).